We begin with the raw amino-acid sequence, 299 residues long: MASEDQSAARSTGKVNWFNASKGYGFITPDDGSVELFVHQSSIVSEGYRSLTVGDAVEFAITQGSDGKTKAVNVTAPGGGSLKKENNSRGNGARRGGGGSGCYNCGELGHISKDCGIGGGGGGGERRSRGGEGCYNCGDTGHFARDCTSAGNGDQRGATKGGNDGCYTCGDVGHVARDCTQKSVGNGDQRGAVKGGNDGCYTCGDVGHFARDCTQKVAAGNVRSGGGGSGTCYSCGGVGHIARDCATKRQPSRGCYQCGGSGHLARDCDQRGSGGGGNDNACYKCGKEGHFARECSSVA.

At Ala2 the chain carries N-acetylalanine. The 65-residue stretch at 12–76 folds into the CSD domain; it reads TGKVNWFNAS…GKTKAVNVTA (65 aa). A disordered region spans residues 76–97; that stretch reads APGGGSLKKENNSRGNGARRGG. 7 consecutive CCHC-type zinc fingers follow at residues 100 to 117, 132 to 149, 164 to 181, 198 to 215, 230 to 247, 253 to 270, and 280 to 297; these read SGCY…DCGI, EGCY…DCTS, DGCY…DCTQ, GTCY…DCAT, RGCY…DCDQ, and NACY…ECSS.

Belongs to the cold shock protein (CSP) family. Mostly expressed in shoot apices and siliques, and, to a lower extent, in roots, cotyledons, stems, shoots, leaves, floral buds and flowers.

Its subcellular location is the nucleus. The protein resides in the cytoplasm. Chaperone that binds to RNA, single- (ssDNA) and double-stranded (dsDNA) DNA, and unwinds nucleic acid duplex. Exhibits a DNA melting activity. May be involved in cold resistance. Prevents seed germination under dehydration or salt stress conditions. In Arabidopsis thaliana (Mouse-ear cress), this protein is Cold shock protein 1 (CSP1).